Reading from the N-terminus, the 184-residue chain is MKPDETPMFDPSLLKEVDWSQNTAIFSPAISPTHPGEGLVLRPLCTADLNKGFFKVLGQLTETGVVSPEQFMKSFEHMKKSGDYYVTVVEDVTLGQIVATATLIIEHKFIHSCAKRGRVEDVVVSDECRGKQLGKLLLSTLTLLSKKLNCYKITLECLPQNVGFYKKFDYTVSEENYMCRRFLK.

One can recognise an N-acetyltransferase domain in the interval 39–184 (LVLRPLCTAD…ENYMCRRFLK (146 aa)). Substrate contacts are provided by residues Thr-61, 108–111 (KFIH), and 120–122 (EDV). Residue 130–135 (GKQLGK) participates in acetyl-CoA binding. 151–152 (YK) contributes to the substrate binding site. 165-167 (YKK) provides a ligand contact to acetyl-CoA. Positions 175 and 181 each coordinate substrate.

The protein belongs to the acetyltransferase family. GNA1 subfamily. As to quaternary structure, homodimer. In terms of tissue distribution, ubiquitous. Shows a strong differential expression pattern in adult hematopoietic precursor cells.

It is found in the golgi apparatus membrane. The protein localises to the endosome membrane. It catalyses the reaction D-glucosamine 6-phosphate + acetyl-CoA = N-acetyl-D-glucosamine 6-phosphate + CoA + H(+). Its pathway is nucleotide-sugar biosynthesis; UDP-N-acetyl-alpha-D-glucosamine biosynthesis; N-acetyl-alpha-D-glucosamine 1-phosphate from alpha-D-glucosamine 6-phosphate (route I): step 1/2. The sequence is that of Glucosamine 6-phosphate N-acetyltransferase (Gnpnat1) from Mus musculus (Mouse).